A 1242-amino-acid polypeptide reads, in one-letter code: MPGLYCPSSWTPLPLTDSWVRACANGPCLSVRARLTYRNPQPQPVDGVFVYPLAEAEVVSGFEAEAAGRRVSFQLQSRRRSQAACCRALGPGLGTPTPRRCAQGHLVLDLAQARSTLVLPTGIIAAAGTMTVTLHSSRELPSRPDGVLHVALPTVLTPLAPPGPPGPPRPPGLCDDSPTSCFGVGSLQEEGLAWEELAAPRDVFSGPARCPAPYTFSFEMLVTGPCLLAGLESPSHALRADAPPHASSAATICVTLAEGHHCDRALEILLHPSEPHQPHLMLEGGSLSSAEYEARVRARRDFQRLQRRDSDGDRQVWFLQRRFHKDILLNPVLALSFCPDLSSKPGHLGTATRELLFLLDSSSVAHKDAIVLAVKSLPPQTLINLAVFGTLVQPLFPESRPCSDDAVQLICESIETLQVPSGPPDVLAALDWAVGQPQHRAYPRQLFLLTAASPMAATTHRTLELMRWHRGTARCFSFGLGPTCHQLLQGLSALSRGQAYFLRPGQRLQPMLVQALRKALEPALSDISVDWFVPDTVEALLTPREIPALYPGDQLLGYCSLFRVDGFRSRPPGGQEPGWQSSGGSVFPSPEEAPSAASPGTEPTGTSEPLGTGTVSAELSSPWAARDSEQSTDALTDPVTDPGPNPSDTAIWRRIFQSSYIREQYVLTHCSASPEPGPGSTGSSESPGSQGPGSPEGSAPLEPPSQQGCRSLAWGEPAGSRSCPLPAPTPAPFKVGALSTEVLGRQHRAALAGRSLSSPPGRANQVPGRPRKPSLGAILDGPSPEPGQQLGQGLDDSGNLLSPAPMDWDMLMEPPFLFTAVPPSGELAPPAVPPQAPRCHVVIRGLCGEQPMCWEVGVGLETLWGPGDGSQPPSPPVREAAWDQALHRLTAASVVRDNEQLALRGGAETTADRGHARRCWLRALQTSKVSSAPSCFTCPVAVDATTREVLPGALQVCSSEPAEPPGTPPASHSHLDAAPLPTVVYSKGLQRGSPAGAWDSDQNGNSKRALGDPATPTEGPRRPPPRPPCRLSMGRRHKLCSPDPGQANNSEGSDHDYLPLVRLQEAPGSFRLDAPFCAAVRISQERLCRASPFAVHRASLSPTSASLPWALLGPGVGQGDSATASCSPSPSSGSEGPGQVDSGRGSDTEASEGAEGLGGTDLRGRTWATAVALAWLEHRCAAAFDEWELTAAKADCWLRAQHLPDGLDLAALKAAARGLFLLLRHWDQNLQLHLLCYSPANV.

In terms of domain architecture, VIT spans 1 to 138; sequence MPGLYCPSSW…TMTVTLHSSR (138 aa). In terms of domain architecture, VWFA spans 354–527; sequence ELLFLLDSSS…KALEPALSDI (174 aa). Disordered regions lie at residues 569-650, 670-726, 751-794, 957-976, 987-1055, and 1118-1159; these read SRPP…SDTA, CSAS…CPLP, LAGR…GQGL, CSSE…SHLD, KGLQ…GSDH, and QGDS…GLGG. The segment covering 588–604 has biased composition (low complexity); that stretch reads PSPEEAPSAASPGTEPT. Polar residues predominate over residues 605–619; the sequence is GTSEPLGTGTVSAEL. Low complexity predominate over residues 681–700; that stretch reads TGSSESPGSQGPGSPEGSAP. The segment covering 1125-1138 has biased composition (low complexity); the sequence is SCSPSPSSGSEGPG.

The polypeptide is von Willebrand factor A domain-containing protein 5B2 (VWA5B2) (Homo sapiens (Human)).